A 262-amino-acid polypeptide reads, in one-letter code: Ribosomal RNA small subunit methyltransferase A (262 aa).

S-adenosyl-L-methionine-binding residues include isoleucine 18, glycine 43, glutamate 65, aspartate 91, and asparagine 110.

It belongs to the class I-like SAM-binding methyltransferase superfamily. rRNA adenine N(6)-methyltransferase family. RsmA subfamily.

The protein resides in the cytoplasm. The catalysed reaction is adenosine(1518)/adenosine(1519) in 16S rRNA + 4 S-adenosyl-L-methionine = N(6)-dimethyladenosine(1518)/N(6)-dimethyladenosine(1519) in 16S rRNA + 4 S-adenosyl-L-homocysteine + 4 H(+). In terms of biological role, specifically dimethylates two adjacent adenosines (A1518 and A1519) in the loop of a conserved hairpin near the 3'-end of 16S rRNA in the 30S particle. May play a critical role in biogenesis of 30S subunits. The chain is Ribosomal RNA small subunit methyltransferase A from Ehrlichia canis (strain Jake).